The sequence spans 127 residues: Large ribosomal subunit protein bL19 (127 aa).

It belongs to the bacterial ribosomal protein bL19 family.

Functionally, this protein is located at the 30S-50S ribosomal subunit interface and may play a role in the structure and function of the aminoacyl-tRNA binding site. This is Large ribosomal subunit protein bL19 from Roseobacter denitrificans (strain ATCC 33942 / OCh 114) (Erythrobacter sp. (strain OCh 114)).